We begin with the raw amino-acid sequence, 423 residues long: Glutamate-1-semialdehyde 2,1-aminomutase (423 aa).

Lysine 266 carries the N6-(pyridoxal phosphate)lysine modification.

This sequence belongs to the class-III pyridoxal-phosphate-dependent aminotransferase family. HemL subfamily. As to quaternary structure, homodimer. Pyridoxal 5'-phosphate is required as a cofactor.

It localises to the cytoplasm. The enzyme catalyses (S)-4-amino-5-oxopentanoate = 5-aminolevulinate. Its pathway is porphyrin-containing compound metabolism; protoporphyrin-IX biosynthesis; 5-aminolevulinate from L-glutamyl-tRNA(Glu): step 2/2. This is Glutamate-1-semialdehyde 2,1-aminomutase from Nitratidesulfovibrio vulgaris (strain DP4) (Desulfovibrio vulgaris).